The sequence spans 52 residues: Repressor-like protein SSo7c3 (52 aa).

The region spanning 4–51 (EEVVKVSRNYQVTIPAKVRQKFPVKEGDLVKVIYDENGGVVKIQILDS) is the SpoVT-AbrB domain.

This is Repressor-like protein SSo7c3 from Saccharolobus solfataricus (strain ATCC 35092 / DSM 1617 / JCM 11322 / P2) (Sulfolobus solfataricus).